Reading from the N-terminus, the 57-residue chain is Lantibiotic nisin-Z (57 aa).

A propeptide spanning residues 1–23 (MSTKDFNLDLVSVSKKDSGASPR) is cleaved from the precursor. 2,3-didehydrobutyrine is present on Thr-25. Residues 26 to 30 (SISLC) constitute a cross-link (lanthionine (Ser-Cys)). The residue at position 28 (Ser-28) is a 2,3-didehydroalanine (Ser). 4 consecutive cross-links (beta-methyllanthionine (Thr-Cys)) follow at residues 31-34 (TPGC), 36-42 (TGALMGC), 46-49 (TATC), and 48-51 (TCNC). Ser-56 carries the post-translational modification 2,3-didehydroalanine (Ser).

Belongs to the type A lantibiotic family. In terms of processing, maturation of lantibiotics involves the enzymatic conversion of Thr, and Ser into dehydrated AA and the formation of thioether bonds with cysteine. This is followed by membrane translocation and cleavage of the modified precursor. The structure of the 2,3-didehydrobutyrine is not discussed in PubMed:15361862. It is probably the Z-isomer by similarity.

In terms of biological role, lanthionine-containing peptide antibiotic (lantibiotic) active on Gram-positive bacteria. The bactericidal activity of lantibiotics is based on depolarization of energized bacterial cytoplasmic membranes, initiated by the formation of aqueous transmembrane pores. The polypeptide is Lantibiotic nisin-Z (nisZ) (Lactococcus lactis subsp. lactis (Streptococcus lactis)).